The following is a 317-amino-acid chain: L-lactate dehydrogenase (317 aa).

NAD(+) is bound by residues valine 16, aspartate 37, and tyrosine 68. Substrate is bound by residues glutamine 85, arginine 91, 123–126 (NPCD), and 151–154 (DSAR). NAD(+) is bound at residue 121–123 (ASN). Histidine 178 acts as the Proton acceptor in catalysis. Residue tyrosine 222 is modified to Phosphotyrosine. Threonine 231 is a substrate binding site.

Belongs to the LDH/MDH superfamily. LDH family. Homotetramer.

The protein resides in the cytoplasm. The catalysed reaction is (S)-lactate + NAD(+) = pyruvate + NADH + H(+). It functions in the pathway fermentation; pyruvate fermentation to lactate; (S)-lactate from pyruvate: step 1/1. Its function is as follows. Catalyzes the conversion of lactate to pyruvate. The chain is L-lactate dehydrogenase from Mesoplasma florum (strain ATCC 33453 / NBRC 100688 / NCTC 11704 / L1) (Acholeplasma florum).